A 136-amino-acid chain; its full sequence is Transcription antitermination protein NusB (136 aa).

Belongs to the NusB family.

Functionally, involved in transcription antitermination. Required for transcription of ribosomal RNA (rRNA) genes. Binds specifically to the boxA antiterminator sequence of the ribosomal RNA (rrn) operons. The sequence is that of Transcription antitermination protein NusB from Kineococcus radiotolerans (strain ATCC BAA-149 / DSM 14245 / SRS30216).